Here is a 243-residue protein sequence, read N- to C-terminus: 4-hydroxy-tetrahydrodipicolinate reductase (243 aa).

Residues 9 to 14 (GANGKM), 78 to 80 (GTS), and 104 to 107 (APNF) each bind NAD(+). His134 serves as the catalytic Proton donor/acceptor. Position 135 (His135) interacts with (S)-2,3,4,5-tetrahydrodipicolinate. The active-site Proton donor is the Lys138. 144 to 145 (GT) is a binding site for (S)-2,3,4,5-tetrahydrodipicolinate.

The protein belongs to the DapB family.

The protein localises to the cytoplasm. The enzyme catalyses (S)-2,3,4,5-tetrahydrodipicolinate + NAD(+) + H2O = (2S,4S)-4-hydroxy-2,3,4,5-tetrahydrodipicolinate + NADH + H(+). The catalysed reaction is (S)-2,3,4,5-tetrahydrodipicolinate + NADP(+) + H2O = (2S,4S)-4-hydroxy-2,3,4,5-tetrahydrodipicolinate + NADPH + H(+). Its pathway is amino-acid biosynthesis; L-lysine biosynthesis via DAP pathway; (S)-tetrahydrodipicolinate from L-aspartate: step 4/4. Catalyzes the conversion of 4-hydroxy-tetrahydrodipicolinate (HTPA) to tetrahydrodipicolinate. The polypeptide is 4-hydroxy-tetrahydrodipicolinate reductase (Legionella pneumophila (strain Corby)).